Here is a 98-residue protein sequence, read N- to C-terminus: Gas vesicle protein J2 (98 aa).

Residues 75–98 are disordered; sequence AGVDADDSKSVLERPDPPTTEGSE. Residues 80–90 are compositionally biased toward basic and acidic residues; that stretch reads DDSKSVLERPD.

Belongs to the gas vesicle GvpA family. GvpF to GvpM interact with each other in vitro, and may form multi-subunit complex(es). Interacts with GvpA.

The protein localises to the gas vesicle. In terms of biological role, a minor component of the gas vesicle. Proteins GvpF to GvpM might be involved in nucleating gas vesicle formation. Gas vesicles are hollow, gas filled proteinaceous nanostructures found in several microbial planktonic microorganisms. They allow positioning of halobacteria at the optimal depth for growth in the poorly aerated, shallow brine pools of their habitat. Its function is as follows. Expression of 2 c-vac DNA fragments containing 2 divergently transcribed regions (gvpE-gvpF-gvpG-gvpH-gvpI-gvpJ-gvpK-gvpL-gvpM and gvpA-gvpC-gvpN-gvpO) allows H.volcanii to produce gas vesicles. In Halobacterium salinarum (strain ATCC 700922 / JCM 11081 / NRC-1) (Halobacterium halobium), this protein is Gas vesicle protein J2.